The primary structure comprises 50 residues: MDMHMLRLLDLQCILHHRLQERMRATSVKLRQYPQILQQHRCGLHPRSLL.

This is an uncharacterized protein from Thermoproteus tenax virus 1 (strain KRA1) (TTV1).